Consider the following 702-residue polypeptide: EPRKFDPTFRGPVYNRGCTDVLCCVLFVIVILGYIALGTVAWIHGDPRKVIYPTDSTGQFCGQKGTPNAKKAILFYFNILKCASPAVLINLQCPTTQMCVSKCPDRFATYTDMQLLYRFNKSHWDYYKQFCKPGFNNPQKSVAQVLRDEDCPSMIVPSRPFLQRCFPDFITRNGTLTVANKTAFKDALDTARSVTELRDAANGITSIHEAKEVGMKIVEDYASCWYWIVIGLFIALVISLIFILLLRFTAGFLLWFIIFAVILLVAYGIWHCYWEFAVLRETPGADVTISDIGFQTDLHVYLQLSQTWLVFMVTLGLTEASIVLMLIFLRKRVRIAIALLREGSRAISYIMSALFYPIITFVLLAICISYWAMTALFLASSGDAVYKVASGNPNCKYANQTCSPESFNRTNITKQCPGAQCLFAFYGGESLYHRYIFILQLCNLLVFLWLVNFTIALGQCTVAGAFASYYWARRKPADIPPCPVFSSFSRALRYHTGSLAFGSLILAVVQLIRVILEYLDHKLKGAHNAFARFLLCCLKCCFWCLERFIRFMNRNAYIMIAIYGKNFCTSAREAFYLLMRNVVRVAVLDKVTDFLLFLGKLLIAGSVGVIAFFLFTRKIPIIQEEVPVLNYYCVPLLTVILGSYLIAHSFFSVYAMCVDTLFLCFCEDLERNDGTTAKPFFMSPGLKRILGKAEQSPKKSRG.

Residues 21–41 (VLCCVLFVIVILGYIALGTVA) traverse the membrane as a helical segment. The Extracellular segment spans residues 42 to 225 (WIHGDPRKVI…KIVEDYASCW (184 aa)). N-linked (GlcNAc...) asparagine glycosylation is found at Asn-120, Asn-173, and Asn-180. The helical transmembrane segment at 226 to 246 (YWIVIGLFIALVISLIFILLL) threads the bilayer. Residues 247–249 (RFT) are Cytoplasmic-facing. A helical transmembrane segment spans residues 250 to 270 (AGFLLWFIIFAVILLVAYGIW). Residues 271–308 (HCYWEFAVLRETPGADVTISDIGFQTDLHVYLQLSQTW) are Extracellular-facing. Residues 309–329 (LVFMVTLGLTEASIVLMLIFL) form a helical membrane-spanning segment. Over 330-334 (RKRVR) the chain is Cytoplasmic. Residues 335–355 (IAIALLREGSRAISYIMSALF) form a helical membrane-spanning segment. Residues 356–357 (YP) lie on the Extracellular side of the membrane. Residues 358–378 (IITFVLLAICISYWAMTALFL) traverse the membrane as a helical segment. Over 379 to 443 (ASSGDAVYKV…RYIFILQLCN (65 aa)) the chain is Cytoplasmic. Residues 444–464 (LLVFLWLVNFTIALGQCTVAG) traverse the membrane as a helical segment. Over 465 to 498 (AFASYYWARRKPADIPPCPVFSSFSRALRYHTGS) the chain is Extracellular. The helical transmembrane segment at 499–519 (LAFGSLILAVVQLIRVILEYL) threads the bilayer. Residues 520-593 (DHKLKGAHNA…RVAVLDKVTD (74 aa)) lie on the Cytoplasmic side of the membrane. The chain crosses the membrane as a helical span at residues 594–614 (FLLFLGKLLIAGSVGVIAFFL). The Extracellular segment spans residues 615–632 (FTRKIPIIQEEVPVLNYY). A helical membrane pass occupies residues 633–653 (CVPLLTVILGSYLIAHSFFSV). Topologically, residues 654-699 (YAMCVDTLFLCFCEDLERNDGTTAKPFFMSPGLKRILGKAEQSPKK) are cytoplasmic.

Belongs to the CTL (choline transporter-like) family.

The protein resides in the cell membrane. It carries out the reaction choline(out) + n H(+)(in) = choline(in) + n H(+)(out). Its function is as follows. Choline/H+ antiporter. The protein is Choline transporter-like protein 5-A (slc44a5a) of Danio rerio (Zebrafish).